The following is a 335-amino-acid chain: MGASSSSALARLGLPARPWPRWLGVAALGLAAVALGTVAWRRAWPRRRRRLQQVGTVAKLWIYPVKSCKGVPVSEAECTAMGLRSGNLRDRFWLVIKEDGHMVTARQEPRLVLISIIYENNCLIFRAPDMDQLVLPSKQPSSNKLHNCRIFGLDIKGRDCGNEAAKWFTNFLKTEAYRLVQFETNMKGRTSRKLLPTLDQNFQVAYPDYCPLLIMTDASLVDLNTRMEKKMKMENFRPNIVVTGCDAFEEDTWDELLIGSVEVKKVMACPRCILTTVDPDTGVIDRKQPLDTLKSYRLCDPSERELYKLSPLFGIYYSVEKIGSLRVGDPVYRMV.

The transit peptide at 1–35 (MGASSSSALARLGLPARPWPRWLGVAALGLAAVAL) directs the protein to the mitochondrion. Residues K59, K138, and K144 each participate in a glycyl lysine isopeptide (Lys-Gly) (interchain with G-Cter in ubiquitin) cross-link. K156 carries the post-translational modification N6-acetyllysine; alternate. K156 is covalently cross-linked (Glycyl lysine isopeptide (Lys-Gly) (interchain with G-Cter in ubiquitin); alternate). Glycyl lysine isopeptide (Lys-Gly) (interchain with G-Cter in ubiquitin) cross-links involve residues K166, K173, K187, K287, and K294. Residues 188 to 334 (GRTSRKLLPT…LRVGDPVYRM (147 aa)) form the MOSC domain.

In terms of assembly, component of a complex composed of cytochrome b5, NADH-cytochrome b5 reductase (CYB5R3) and MTARC2. The cofactor is Mo-molybdopterin. Post-translationally, ubiquitinated by PRKN during mitophagy, leading to its degradation and enhancement of mitophagy. Deubiquitinated by USP30.

The protein localises to the mitochondrion outer membrane. It is found in the peroxisome. The catalysed reaction is N(omega)-hydroxy-L-arginine + 2 Fe(II)-[cytochrome b5] + 2 H(+) = L-arginine + 2 Fe(III)-[cytochrome b5] + H2O. In terms of biological role, catalyzes the reduction of N-oxygenated molecules, acting as a counterpart of cytochrome P450 and flavin-containing monooxygenases in metabolic cycles. As a component of prodrug-converting system, reduces a multitude of N-hydroxylated prodrugs particularly amidoximes, leading to increased drug bioavailability. May be involved in mitochondrial N(omega)-hydroxy-L-arginine (NOHA) reduction, regulating endogenous nitric oxide levels and biosynthesis. Postulated to cleave the N-OH bond of N-hydroxylated substrates in concert with electron transfer from NADH to cytochrome b5 reductase then to cytochrome b5, the ultimate electron donor that primes the active site for substrate reduction. This chain is Mitochondrial amidoxime reducing component 2, found in Homo sapiens (Human).